The chain runs to 155 residues: Ribosomal RNA large subunit methyltransferase H (155 aa).

S-adenosyl-L-methionine is bound by residues leucine 72, glycine 103, and 122-127 (LSDLTL).

Belongs to the RNA methyltransferase RlmH family. In terms of assembly, homodimer.

It is found in the cytoplasm. It catalyses the reaction pseudouridine(1915) in 23S rRNA + S-adenosyl-L-methionine = N(3)-methylpseudouridine(1915) in 23S rRNA + S-adenosyl-L-homocysteine + H(+). Specifically methylates the pseudouridine at position 1915 (m3Psi1915) in 23S rRNA. The sequence is that of Ribosomal RNA large subunit methyltransferase H from Acidovorax ebreus (strain TPSY) (Diaphorobacter sp. (strain TPSY)).